Consider the following 774-residue polypeptide: 5-methyltetrahydropteroyltriglutamate--homocysteine methyltransferase (774 aa).

Residues 24–27 (RELK) and K120 contribute to the 5-methyltetrahydropteroyltri-L-glutamate site. Residues 446 to 448 (IGS) and E499 each bind L-homocysteine. L-methionine-binding positions include 446-448 (IGS) and E499. W576 contributes to the 5-methyltetrahydropteroyltri-L-glutamate binding site. D614 is a binding site for L-homocysteine. D614 serves as a coordination point for L-methionine. Position 620 (E620) interacts with 5-methyltetrahydropteroyltri-L-glutamate. Positions 656, 658, and 680 each coordinate Zn(2+). The active-site Proton donor is the H709. Position 741 (C741) interacts with Zn(2+).

This sequence belongs to the vitamin-B12 independent methionine synthase family. Requires Zn(2+) as cofactor.

The catalysed reaction is 5-methyltetrahydropteroyltri-L-glutamate + L-homocysteine = tetrahydropteroyltri-L-glutamate + L-methionine. It functions in the pathway amino-acid biosynthesis; L-methionine biosynthesis via de novo pathway; L-methionine from L-homocysteine (MetE route): step 1/1. Functionally, catalyzes the transfer of a methyl group from 5-methyltetrahydrofolate to homocysteine resulting in methionine formation. The chain is 5-methyltetrahydropteroyltriglutamate--homocysteine methyltransferase from Streptomyces griseus subsp. griseus (strain JCM 4626 / CBS 651.72 / NBRC 13350 / KCC S-0626 / ISP 5235).